Here is a 274-residue protein sequence, read N- to C-terminus: Large ribosomal subunit protein uL2cz/uL2cy (274 aa).

2 disordered regions span residues 1–22 (MAIH…DSQV) and 225–274 (PVDH…RRSK).

The protein belongs to the universal ribosomal protein uL2 family. As to quaternary structure, part of the 50S ribosomal subunit.

The protein resides in the plastid. It is found in the chloroplast. The chain is Large ribosomal subunit protein uL2cz/uL2cy (rpl2-A) from Nasturtium officinale (Watercress).